We begin with the raw amino-acid sequence, 187 residues long: Small ribosomal subunit protein uS7 (187 aa).

It belongs to the universal ribosomal protein uS7 family. In terms of assembly, part of the 30S ribosomal subunit.

Its function is as follows. One of the primary rRNA binding proteins, it binds directly to 16S rRNA where it nucleates assembly of the head domain of the 30S subunit. Is located at the subunit interface close to the decoding center. The chain is Small ribosomal subunit protein uS7 from Methanosphaera stadtmanae (strain ATCC 43021 / DSM 3091 / JCM 11832 / MCB-3).